Consider the following 349-residue polypeptide: tRNA pseudouridine synthase D (349 aa).

Phe-27 is a binding site for substrate. The active-site Nucleophile is Asp-80. Substrate is bound at residue Asn-129. The region spanning 155 to 303 (GVPNYFGAQR…VEAARRAMLL (149 aa)) is the TRUD domain. Phe-329 provides a ligand contact to substrate.

The protein belongs to the pseudouridine synthase TruD family.

It catalyses the reaction uridine(13) in tRNA = pseudouridine(13) in tRNA. Functionally, responsible for synthesis of pseudouridine from uracil-13 in transfer RNAs. This Shigella dysenteriae serotype 1 (strain Sd197) protein is tRNA pseudouridine synthase D.